A 355-amino-acid chain; its full sequence is S-adenosylmethionine:tRNA ribosyltransferase-isomerase (355 aa).

The protein belongs to the QueA family. As to quaternary structure, monomer.

The protein localises to the cytoplasm. It catalyses the reaction 7-aminomethyl-7-carbaguanosine(34) in tRNA + S-adenosyl-L-methionine = epoxyqueuosine(34) in tRNA + adenine + L-methionine + 2 H(+). It functions in the pathway tRNA modification; tRNA-queuosine biosynthesis. In terms of biological role, transfers and isomerizes the ribose moiety from AdoMet to the 7-aminomethyl group of 7-deazaguanine (preQ1-tRNA) to give epoxyqueuosine (oQ-tRNA). In Photorhabdus laumondii subsp. laumondii (strain DSM 15139 / CIP 105565 / TT01) (Photorhabdus luminescens subsp. laumondii), this protein is S-adenosylmethionine:tRNA ribosyltransferase-isomerase.